The primary structure comprises 389 residues: Arrestin-C (389 aa).

A disordered region spans residues 369–389 (AQQEPSGESQEALAAEGNEGS).

It belongs to the arrestin family. Homodimer; disulfide-linked in response to retinal illumination. Interacts with CXCR4; the interaction is dependent on the C-terminal phosphorylation of CXCR4 and modulates the calcium ion mobilization activity of CXCR4. Interacts with GPR84. Expressed in cone photoreceptors in the retina (at protein level).

It is found in the photoreceptor inner segment. Its subcellular location is the cell projection. It localises to the cilium. The protein resides in the photoreceptor outer segment. Functionally, may play a role in an as yet undefined retina-specific signal transduction. Could bind to photoactivated-phosphorylated red/green opsins. This Bos taurus (Bovine) protein is Arrestin-C (ARR3).